A 387-amino-acid polypeptide reads, in one-letter code: Phosphoglycerate kinase (387 aa).

Residues 21–23, R36, 59–62, R114, and R147 each bind substrate; these read DLN and HLGR. ATP-binding positions include K198, E314, and 340–343; that span reads GGDT.

The protein belongs to the phosphoglycerate kinase family. In terms of assembly, monomer.

It is found in the cytoplasm. The enzyme catalyses (2R)-3-phosphoglycerate + ATP = (2R)-3-phospho-glyceroyl phosphate + ADP. The protein operates within carbohydrate degradation; glycolysis; pyruvate from D-glyceraldehyde 3-phosphate: step 2/5. This Erwinia tasmaniensis (strain DSM 17950 / CFBP 7177 / CIP 109463 / NCPPB 4357 / Et1/99) protein is Phosphoglycerate kinase.